Consider the following 420-residue polypeptide: MEETESSTQTPVPQHGISLASYPVRAVIRMRRKIRTLKKSRLQLDLTGGRSLDSAKASLRRQISMDRATLFKSSTYEKQQYFNFDTPTLEKLALNSQIRKRNRKKSRHVLYPGNVRKCLPVEHKSKAKRCLLLFIGIVCFQILNAIENLDDNLQKYDLDGLEKTLQREVFGQKRAIEKLMDHLQDYLATHYHNKPLVLSFNGPSGVGKSHTGRLLAKHFRSIMDNDFVLQYYTMHNCPNENDVTQCQSEMSGLISEMISRAEIEEKIPVFIFDEVEVMPVALLDVLHRYFQLNQSNEYLNAVYILISNIGGNEITKFVLQNASNDFLNLPQELHQIVISSLQKHHSLWDVAEIVPFTLLEKKHILDCFLDELLREGFYPDHSNIESLAGQLRYYTKENKEYSISGCKQVVAKVNLLQPYT.

The helical transmembrane segment at 130–150 (CLLLFIGIVCFQILNAIENLD) threads the bilayer. 202–209 (GPSGVGKS) contributes to the ATP binding site.

Belongs to the ClpA/ClpB family. Torsin subfamily.

It is found in the membrane. The polypeptide is Torsin-4A-A (tor4a-a) (Xenopus laevis (African clawed frog)).